Here is a 400-residue protein sequence, read N- to C-terminus: Endoplasmin (400 aa).

At K1 the chain carries N6-succinyllysine. N42 carries N-linked (GlcNAc...) asparagine glycosylation. Position 44 is a phosphoserine (S44). Position 76 is an N6-acetyllysine (K76). N-linked (GlcNAc...) asparagine glycans are attached at residues N78 and N99. An N6-succinyllysine modification is found at K230. A disordered region spans residues 346-400; sequence IDPEAQVEEEPEEEPEDTTEDTEQDEEEEVDAGTEEEEEEEQETAKESTAEKDEL. A compositionally biased stretch (acidic residues) spans 350–387; it reads AQVEEEPEEEPEDTTEDTEQDEEEEVDAGTEEEEEEEQ. T379 is subject to Phosphothreonine. The segment covering 388-400 has biased composition (basic and acidic residues); sequence ETAKESTAEKDEL. A Prevents secretion from ER motif is present at residues 397–400; the sequence is KDEL.

Belongs to the heat shock protein 90 family. As to quaternary structure, homodimer; disulfide-linked. Component of an EIF2 complex at least composed of CELF1/CUGBP1, CALR, CALR3, EIF2S1, EIF2S2, HSP90B1 and HSPA5. Part of a large chaperone multiprotein complex comprising DNAJB11, HSP90B1, HSPA5, HYOU, PDIA2, PDIA4, PDIA6, PPIB, SDF2L1, UGGT1 and very small amounts of ERP29, but not, or at very low levels, CALR nor CANX. Interacts with AIMP1; regulates its retention in the endoplasmic reticulum. Hyperglycosylated form interacts with OS9; promoting its degradation by the endoplasmic reticulum associated degradation (ERAD). Interacts with CNPY3. This interaction is disrupted in the presence of ATP. Interacts with TLR4 and TLR9, but not with TLR3. Interacts with MZB1 in a calcium-dependent manner. Interacts with METTL23. Interacts with IL1B; the interaction facilitates cargo translocation into the ERGIC. Interacts with EIF2AK3. In terms of processing, phosphorylated by CK2. N-glycosylated cotranslationally at Asn-217 by STT3A-containing OST-A complex: this glycosylation is constitutive. In response to various stress, 5 additional facultative sites (Asn-62, Asn-107, Asn-445, Asn-481 and Asn-502) can be glycosylated post-translationally by STT3B-containing OST-B complex, leading to a hyperglycosylated form that is degraded by the ER-associated degradation (ERAD) pathway. In normal conditions, the OST-A complex together with CCDC134 prevent glycosylation at facultative sites during protein folding, thereby preventing hyperglycosylation. Mechanistically, nascent HSP90B1 is tethered during translation to a specialized CCDC134-containing translocon that forms a microenvironment for its folding, in which STT3A associates with the SRT pseudosubstrate motif, and prevents access to facultative glycosylation sites until folding is completed, rendering its facultative sites inaccessible to the OST-B complex.

It localises to the endoplasmic reticulum lumen. The protein localises to the sarcoplasmic reticulum lumen. The protein resides in the melanosome. It catalyses the reaction ATP + H2O = ADP + phosphate + H(+). In terms of biological role, ATP-dependent chaperone involved in the processing of proteins in the endoplasmic reticulum, regulating their transport. Together with MESD, acts as a modulator of the Wnt pathway by promoting the folding of LRP6, a coreceptor of the canonical Wnt pathway. When associated with CNPY3, required for proper folding of Toll-like receptors. Promotes folding and trafficking of TLR4 to the cell surface. May participate in the unfolding of cytosolic leaderless cargos (lacking the secretion signal sequence) such as the interleukin 1/IL-1 to facilitate their translocation into the ERGIC (endoplasmic reticulum-Golgi intermediate compartment) and secretion; the translocation process is mediated by the cargo receptor TMED10. This Mesocricetus auratus (Golden hamster) protein is Endoplasmin (HSP90B1).